The following is a 362-amino-acid chain: S-adenosylmethionine-dependent nucleotide dehydratase RSAD2 (362 aa).

The tract at residues 49-71 (QQLQGKTEAGEPPRAQEDSHLPT) is disordered. The span at 56 to 68 (EAGEPPRAQEDSH) shows a compositional bias: basic and acidic residues. The region spanning 70-290 (PTTPTSVNYH…LDRHKDVSCL (221 aa)) is the Radical SAM core domain. [4Fe-4S] cluster-binding residues include C84, C88, and C91. The residue at position 198 (K198) is an N6-acetyllysine. Residue K207 forms a Glycyl lysine isopeptide (Lys-Gly) (interchain with G-Cter in ubiquitin) linkage.

It belongs to the radical SAM superfamily. RSAD2 family. As to quaternary structure, homodimer. Interacts with IRAK1 and TRAF6. Interacts with FPPS. Interacts with HADHB. Interacts (via C-terminus) with VAPA/VAP33 (via C-terminus). It depends on [4Fe-4S] cluster as a cofactor. In terms of processing, acetylated by HAT1. HAT1-mediated acetylation of Lys-198 in turn recruits UBE4A that stimulates RSAD2 polyubiquitination leading to proteasomal degradation. Post-translationally, 'Lys-6'-linked polyubiquitination at Lys-207 leads to RSAD2 protein degradation.

It localises to the endoplasmic reticulum membrane. The protein localises to the golgi apparatus. It is found in the endoplasmic reticulum. The protein resides in the lipid droplet. Its subcellular location is the mitochondrion. It localises to the mitochondrion inner membrane. The protein localises to the mitochondrion outer membrane. It catalyses the reaction CTP + AH2 + S-adenosyl-L-methionine = 3'-deoxy-3',4'-didehydro-CTP + 5'-deoxyadenosine + L-methionine + A + H2O + H(+). With respect to regulation, IRAK1 and TRAF6 synergistically activate RSAD2 increasing its activity with CTP as substrate about 10-fold. Interferon-inducible antiviral protein which plays a major role in the cell antiviral state induced by type I and type II interferon. Catalyzes the conversion of cytidine triphosphate (CTP) to 3'-deoxy-3',4'-didehydro-CTP (ddhCTP) via a SAM-dependent radical mechanism. In turn, ddhCTP acts as a chain terminator for the RNA-dependent RNA polymerases from multiple viruses and directly inhibits viral replication. Therefore, inhibits a wide range of DNA and RNA viruses. Also promotes TLR7 and TLR9-dependent production of IFN-beta production in plasmacytoid dendritic cells (pDCs) by facilitating 'Lys-63'-linked ubiquitination of IRAK1 by TRAF6. Plays a role in CD4+ T-cells activation and differentiation. Facilitates T-cell receptor (TCR)-mediated GATA3 activation and optimal T-helper 2 (Th2) cytokine production by modulating NFKB1 and JUNB activities. Can inhibit secretion of soluble proteins. This chain is S-adenosylmethionine-dependent nucleotide dehydratase RSAD2, found in Sus scrofa (Pig).